A 260-amino-acid chain; its full sequence is Membrane protein insertase YidC 1 (260 aa).

Residues Met-1–Gly-22 form the signal peptide. Cys-23 is lipidated: N-palmitoyl cysteine. The S-diacylglycerol cysteine moiety is linked to residue Cys-23. 5 helical membrane passes run Ile-29–Ile-49, Val-52–Ile-72, Leu-133–Ile-153, Phe-164–Leu-184, and Met-213–Ile-233.

The protein belongs to the OXA1/ALB3/YidC family. Type 2 subfamily.

Its subcellular location is the cell membrane. Required for the insertion and/or proper folding and/or complex formation of integral membrane proteins into the membrane. Involved in integration of membrane proteins that insert both dependently and independently of the Sec translocase complex, as well as at least some lipoproteins. This is Membrane protein insertase YidC 1 from Bacillus anthracis.